We begin with the raw amino-acid sequence, 1074 residues long: Semaphorin-5A (1074 aa).

Positions 1 to 22 are cleaved as a signal peptide; it reads MKGACILAWLFSSLGVWRLARP. Positions 35-484 constitute a Sema domain; sequence HPVVSYKEIG…LQEHVVKIPL (450 aa). 2 disulfide bridges follow: Cys104/Cys114 and Cys131/Cys140. 4 N-linked (GlcNAc...) asparagine glycosylation sites follow: Asn147, Asn168, Asn227, and Asn277. 2 disulfides stabilise this stretch: Cys254-Cys357 and Cys278-Cys320. Residues Asn323 and Asn367 are each glycosylated (N-linked (GlcNAc...) asparagine). One can recognise a PSI domain in the interval 486-533; the sequence is RCHFHQTRGACIGAQDPYCGWDAVMKKCTSLEESLSMTQWDQSVPTCP. Asn536 and Asn591 each carry an N-linked (GlcNAc...) asparagine glycan. TSP type-1 domains are found at residues 540-593, 595-651, and 653-702; these read DGSF…TNCS, NGGW…LLCP, and HVFW…NACP. Intrachain disulfides connect Cys607–Cys644, Cys611–Cys650, Cys622–Cys634, Cys665–Cys696, Cys669–Cys701, and Cys680–Cys686. Asn717 carries N-linked (GlcNAc...) asparagine glycosylation. 3 consecutive TSP type-1 domains span residues 784–839, 841–896, and 897–944; these read NGAW…LPCP, DGVW…QTCP, and ENWS…VFDS. 6 disulfide bridges follow: Cys796–Cys833, Cys800–Cys838, Cys811–Cys823, Cys853–Cys890, Cys857–Cys895, and Cys868–Cys880. N-linked (GlcNAc...) asparagine glycans are attached at residues Asn898 and Asn933. Residues 969–989 form a helical membrane-spanning segment; sequence FHMMAVGLSSSILGCLLTLLV. Residue Asn1015 is glycosylated (N-linked (GlcNAc...) asparagine).

Binds PLXNB3.

The protein localises to the membrane. In terms of biological role, bifunctional axonal guidance cue regulated by sulfated proteoglycans; attractive effects result from interactions with heparan sulfate proteoglycans (HSPGs), while the inhibitory effects depend on interactions with chondroitin sulfate proteoglycans (CSPGs). Ligand for receptor PLXNB3. In glioma cells, SEMA5A stimulation of PLXNB3 results in the disassembly of F-actin stress fibers, disruption of focal adhesions and cellular collapse as well as inhibition of cell migration and invasion through ARHGDIA-mediated inactivation of RAC1. May promote angiogenesis by increasing endothelial cell proliferation and migration and inhibiting apoptosis. This chain is Semaphorin-5A (Sema5a), found in Rattus norvegicus (Rat).